Consider the following 412-residue polypeptide: Serine hydroxymethyltransferase (412 aa).

Residues Leu-117 and 121–123 (GHL) contribute to the (6S)-5,6,7,8-tetrahydrofolate site. An N6-(pyridoxal phosphate)lysine modification is found at Lys-226. Position 349 to 351 (349 to 351 (SPF)) interacts with (6S)-5,6,7,8-tetrahydrofolate.

Belongs to the SHMT family. As to quaternary structure, homodimer. It depends on pyridoxal 5'-phosphate as a cofactor.

The protein resides in the cytoplasm. The catalysed reaction is (6R)-5,10-methylene-5,6,7,8-tetrahydrofolate + glycine + H2O = (6S)-5,6,7,8-tetrahydrofolate + L-serine. It participates in one-carbon metabolism; tetrahydrofolate interconversion. It functions in the pathway amino-acid biosynthesis; glycine biosynthesis; glycine from L-serine: step 1/1. Its function is as follows. Catalyzes the reversible interconversion of serine and glycine with tetrahydrofolate (THF) serving as the one-carbon carrier. This reaction serves as the major source of one-carbon groups required for the biosynthesis of purines, thymidylate, methionine, and other important biomolecules. Also exhibits THF-independent aldolase activity toward beta-hydroxyamino acids, producing glycine and aldehydes, via a retro-aldol mechanism. In Oleidesulfovibrio alaskensis (strain ATCC BAA-1058 / DSM 17464 / G20) (Desulfovibrio alaskensis), this protein is Serine hydroxymethyltransferase.